Consider the following 429-residue polypeptide: Light-independent protochlorophyllide reductase subunit N (429 aa).

Cys-32, Cys-57, and Cys-118 together coordinate [4Fe-4S] cluster.

Belongs to the BchN/ChlN family. In terms of assembly, protochlorophyllide reductase is composed of three subunits; BchL, BchN and BchB. Forms a heterotetramer of two BchB and two BchN subunits. [4Fe-4S] cluster serves as cofactor.

It catalyses the reaction chlorophyllide a + oxidized 2[4Fe-4S]-[ferredoxin] + 2 ADP + 2 phosphate = protochlorophyllide a + reduced 2[4Fe-4S]-[ferredoxin] + 2 ATP + 2 H2O. It functions in the pathway porphyrin-containing compound metabolism; bacteriochlorophyll biosynthesis (light-independent). Its function is as follows. Component of the dark-operative protochlorophyllide reductase (DPOR) that uses Mg-ATP and reduced ferredoxin to reduce ring D of protochlorophyllide (Pchlide) to form chlorophyllide a (Chlide). This reaction is light-independent. The NB-protein (BchN-BchB) is the catalytic component of the complex. In Rhodopseudomonas palustris (strain TIE-1), this protein is Light-independent protochlorophyllide reductase subunit N.